The chain runs to 190 residues: Threonylcarbamoyl-AMP synthase (190 aa).

In terms of domain architecture, YrdC-like spans 7–190 (TGSIAAAVDL…ALTGELFRQG (184 aa)).

This sequence belongs to the SUA5 family. TsaC subfamily.

Its subcellular location is the cytoplasm. The catalysed reaction is L-threonine + hydrogencarbonate + ATP = L-threonylcarbamoyladenylate + diphosphate + H2O. Required for the formation of a threonylcarbamoyl group on adenosine at position 37 (t(6)A37) in tRNAs that read codons beginning with adenine. Catalyzes the conversion of L-threonine, HCO(3)(-)/CO(2) and ATP to give threonylcarbamoyl-AMP (TC-AMP) as the acyladenylate intermediate, with the release of diphosphate. This chain is Threonylcarbamoyl-AMP synthase, found in Salmonella choleraesuis (strain SC-B67).